A 476-amino-acid polypeptide reads, in one-letter code: Cysteine--tRNA ligase (476 aa).

Residue cysteine 28 coordinates Zn(2+). The 'HIGH' region motif lies at 30-40 (PTVYDHTHLGH). Cysteine 208, histidine 233, and glutamate 237 together coordinate Zn(2+). The 'KMSKS' region motif lies at 265 to 269 (KMSKS). Residue lysine 268 participates in ATP binding.

It belongs to the class-I aminoacyl-tRNA synthetase family. Zn(2+) is required as a cofactor.

Its subcellular location is the cytoplasm. The catalysed reaction is tRNA(Cys) + L-cysteine + ATP = L-cysteinyl-tRNA(Cys) + AMP + diphosphate. The sequence is that of Cysteine--tRNA ligase from Methanococcus maripaludis (strain C7 / ATCC BAA-1331).